Consider the following 218-residue polypeptide: Ribose-5-phosphate isomerase A (218 aa).

Substrate contacts are provided by residues 27 to 30 (TGST), 80 to 83 (DGAD), and 93 to 96 (KGGG). Glu-102 acts as the Proton acceptor in catalysis. Lys-120 is a binding site for substrate.

The protein belongs to the ribose 5-phosphate isomerase family. Homodimer.

The catalysed reaction is aldehydo-D-ribose 5-phosphate = D-ribulose 5-phosphate. The protein operates within carbohydrate degradation; pentose phosphate pathway; D-ribose 5-phosphate from D-ribulose 5-phosphate (non-oxidative stage): step 1/1. In terms of biological role, catalyzes the reversible conversion of ribose-5-phosphate to ribulose 5-phosphate. This chain is Ribose-5-phosphate isomerase A, found in Picrophilus torridus (strain ATCC 700027 / DSM 9790 / JCM 10055 / NBRC 100828 / KAW 2/3).